The primary structure comprises 338 residues: Ketol-acid reductoisomerase (NADP(+)) (338 aa).

The KARI N-terminal Rossmann domain occupies 1-181 (MKVYYDKDCN…GGGRSGIIET (181 aa)). NADP(+) contacts are provided by residues 24-27 (YGSQ), R47, S50, S52, and 82-85 (DETQ). The active site involves H107. G133 serves as a coordination point for NADP(+). The KARI C-terminal knotted domain occupies 182–327 (NFREETETDL…ARLRAMMPWI (146 aa)). 4 residues coordinate Mg(2+): D190, E194, E226, and E230. Residue S251 coordinates substrate.

This sequence belongs to the ketol-acid reductoisomerase family. It depends on Mg(2+) as a cofactor.

The catalysed reaction is (2R)-2,3-dihydroxy-3-methylbutanoate + NADP(+) = (2S)-2-acetolactate + NADPH + H(+). The enzyme catalyses (2R,3R)-2,3-dihydroxy-3-methylpentanoate + NADP(+) = (S)-2-ethyl-2-hydroxy-3-oxobutanoate + NADPH + H(+). Its pathway is amino-acid biosynthesis; L-isoleucine biosynthesis; L-isoleucine from 2-oxobutanoate: step 2/4. The protein operates within amino-acid biosynthesis; L-valine biosynthesis; L-valine from pyruvate: step 2/4. Functionally, involved in the biosynthesis of branched-chain amino acids (BCAA). Catalyzes an alkyl-migration followed by a ketol-acid reduction of (S)-2-acetolactate (S2AL) to yield (R)-2,3-dihydroxy-isovalerate. In the isomerase reaction, S2AL is rearranged via a Mg-dependent methyl migration to produce 3-hydroxy-3-methyl-2-ketobutyrate (HMKB). In the reductase reaction, this 2-ketoacid undergoes a metal-dependent reduction by NADPH to yield (R)-2,3-dihydroxy-isovalerate. In Pelobacter propionicus (strain DSM 2379 / NBRC 103807 / OttBd1), this protein is Ketol-acid reductoisomerase (NADP(+)).